Consider the following 446-residue polypeptide: Sensor-type histidine kinase PrrB (446 aa).

Transmembrane regions (helical) follow at residues V19–V39 and L151–F171. An HAMP domain is found at A172 to N222. Residues V237–S446 form the Histidine kinase domain. The residue at position 240 (H240) is a Phosphohistidine; by autocatalysis.

In terms of processing, autophosphorylated.

Its subcellular location is the cell membrane. It catalyses the reaction ATP + protein L-histidine = ADP + protein N-phospho-L-histidine.. Its function is as follows. Member of the two-component regulatory system PrrB/PrrA that is involved specifically in early intracellular multiplication of Mycobacterium and is essential for its viability. Functions as a sensor protein kinase which is autophosphorylated at a histidine residue and transfers its phosphate group to the conserved aspartic acid residue in the regulatory domain of PrrA. In turn, PrrA binds to the upstream promoter regions of target genes including itself to positively regulate their expression. This Mycobacterium bovis (strain ATCC BAA-935 / AF2122/97) protein is Sensor-type histidine kinase PrrB (prrB).